Consider the following 27-residue polypeptide: Natriuretic peptides A (27 aa).

C7 and C23 are oxidised to a cystine.

Belongs to the natriuretic peptide family.

The protein resides in the secreted. Functionally, hormone playing a key role in cardiovascular homeostasis through regulation of natriuresis, diuresis, and vasodilation. Has a cGMP-stimulating activity. The protein is Natriuretic peptides A (nppa) of Anguilla japonica (Japanese eel).